A 244-amino-acid polypeptide reads, in one-letter code: 1-(5-phosphoribosyl)-5-[(5-phosphoribosylamino)methylideneamino] imidazole-4-carboxamide isomerase (244 aa).

Residue aspartate 10 is the Proton acceptor of the active site. Aspartate 132 serves as the catalytic Proton donor.

It belongs to the HisA/HisF family.

It is found in the cytoplasm. The catalysed reaction is 1-(5-phospho-beta-D-ribosyl)-5-[(5-phospho-beta-D-ribosylamino)methylideneamino]imidazole-4-carboxamide = 5-[(5-phospho-1-deoxy-D-ribulos-1-ylimino)methylamino]-1-(5-phospho-beta-D-ribosyl)imidazole-4-carboxamide. It participates in amino-acid biosynthesis; L-histidine biosynthesis; L-histidine from 5-phospho-alpha-D-ribose 1-diphosphate: step 4/9. In Stenotrophomonas maltophilia (strain K279a), this protein is 1-(5-phosphoribosyl)-5-[(5-phosphoribosylamino)methylideneamino] imidazole-4-carboxamide isomerase.